The chain runs to 215 residues: 3-isopropylmalate dehydratase small subunit (215 aa).

It belongs to the LeuD family. LeuD type 1 subfamily. Heterodimer of LeuC and LeuD.

It carries out the reaction (2R,3S)-3-isopropylmalate = (2S)-2-isopropylmalate. Its pathway is amino-acid biosynthesis; L-leucine biosynthesis; L-leucine from 3-methyl-2-oxobutanoate: step 2/4. Its function is as follows. Catalyzes the isomerization between 2-isopropylmalate and 3-isopropylmalate, via the formation of 2-isopropylmaleate. In Chromohalobacter salexigens (strain ATCC BAA-138 / DSM 3043 / CIP 106854 / NCIMB 13768 / 1H11), this protein is 3-isopropylmalate dehydratase small subunit.